Here is a 153-residue protein sequence, read N- to C-terminus: SsrA-binding protein (153 aa).

A disordered region spans residues 131 to 153 (EYDKRDSIRERDDRREMDRAFKR).

Belongs to the SmpB family.

It localises to the cytoplasm. Functionally, required for rescue of stalled ribosomes mediated by trans-translation. Binds to transfer-messenger RNA (tmRNA), required for stable association of tmRNA with ribosomes. tmRNA and SmpB together mimic tRNA shape, replacing the anticodon stem-loop with SmpB. tmRNA is encoded by the ssrA gene; the 2 termini fold to resemble tRNA(Ala) and it encodes a 'tag peptide', a short internal open reading frame. During trans-translation Ala-aminoacylated tmRNA acts like a tRNA, entering the A-site of stalled ribosomes, displacing the stalled mRNA. The ribosome then switches to translate the ORF on the tmRNA; the nascent peptide is terminated with the 'tag peptide' encoded by the tmRNA and targeted for degradation. The ribosome is freed to recommence translation, which seems to be the essential function of trans-translation. The chain is SsrA-binding protein from Parabacteroides distasonis (strain ATCC 8503 / DSM 20701 / CIP 104284 / JCM 5825 / NCTC 11152).